The sequence spans 797 residues: N-acetylneuraminate (7)9-O-acetyltransferase (797 aa).

Over Met1–Ser18 the chain is Cytoplasmic. The chain crosses the membrane as a helical span at residues Val19 to Ala39. Residues Ser40–Gln313 are Lumenal-facing. N-linked (GlcNAc...) asparagine glycosylation occurs at Asn46. Residue Ser94 is the Acyl-ester intermediate of the active site. Residues Asn175 and Asn187 are each glycosylated (N-linked (GlcNAc...) asparagine). Active-site residues include Asp270 and His273. Residues Lys314–His334 form a helical membrane-spanning segment. Residues Arg335–Ser363 lie on the Cytoplasmic side of the membrane. Residues Leu364–Cys384 form a helical membrane-spanning segment. The Lumenal segment spans residues Asp385–Lys395. The chain crosses the membrane as a helical span at residues Phe396–Tyr416. Topologically, residues Asn417–Gln439 are cytoplasmic. Residues Leu440–Ile460 form a helical membrane-spanning segment. Residue Arg461 is a topological domain, lumenal. Residues Val462–Lys482 form a helical membrane-spanning segment. Residues Gly483–Gly486 lie on the Cytoplasmic side of the membrane. A helical membrane pass occupies residues Ile487 to Val507. Residues Met508–Gln513 are Lumenal-facing. The helical transmembrane segment at Phe514 to Leu534 threads the bilayer. The Cytoplasmic segment spans residues Trp535 to Asn546. The chain crosses the membrane as a helical span at residues Phe547 to Leu567. Over Ala568–Arg599 the chain is Lumenal. The helical transmembrane segment at Trp600–Leu620 threads the bilayer. The Cytoplasmic portion of the chain corresponds to Gln621–Lys638. The chain crosses the membrane as a helical span at residues Ile639 to Ser659. At Ser660–His671 the chain is on the lumenal side. The chain crosses the membrane as a helical span at residues Pro672–Ala692. Over Arg693–Ser698 the chain is Cytoplasmic. The helical transmembrane segment at Phe699–Leu719 threads the bilayer. The Lumenal portion of the chain corresponds to Ala720–Gly725. The chain crosses the membrane as a helical span at residues Ile726–Val746. The Cytoplasmic segment spans residues Cys747–Ser770. Residues Leu771 to Ile791 traverse the membrane as a helical segment. Over Gln792–Leu797 the chain is Lumenal.

This sequence belongs to the PC-esterase family. CASD1 subfamily. N-glycosylated. Ubiquitously expressed.

Its subcellular location is the golgi apparatus membrane. It carries out the reaction CMP-N-acetyl-beta-neuraminate + acetyl-CoA = CMP-N-acetyl-9-O-acetyl-beta-neuraminate + CoA. It catalyses the reaction a ganglioside GD3 (d18:1(4E)) + acetyl-CoA = a ganglioside Ac-O-7-GD3(d18:1(4E)) + CoA. The enzyme catalyses CMP-N-acetyl-beta-neuraminate + acetyl-CoA = CMP-N-acetyl-7-O-acetyl-beta-neuraminate + CoA. Functionally, key enzyme in the biosynthesis of O-acetylated (O-Ac) sialoglycans such as gangliosides O-AcGD3 and O-AcGD2, which affect various processes such as cell-cell interactions, host-pathogen recognition. Catalyzes the transfer of an acetyl group from a donor, the acetyl-coenzyme-A molecule (acetyl-CoA), to the C7/8/9 OH-position of a sialic acid residue. The primary site of O-acetyl group transfer on sialic acid seems to depend on cell type and can be C7, from which the O-acetyl group could subsequently migrate to the C8 and then to the C9 position, or at C9 with possibility of migrating to the C8 and then to the C7 position. Together with ST8SIA1 (GD3 synthase) it increases the levels of ganglioside Ac-O-7-GD3. Can transfer the acetyl group from acetyl-CoA to free sialate (N-acetylneuraminate, Neu5Ac) in vitro, but has preferred substrate specificity for CMP-activated sialate (CMP-Neu5Ac), resulting in the formation of 9-O-acetylated CMP-Neu5Ac (CMP-Neu5,9Ac2). CMP-Neu5,9Ac2 may be used by sialyltransferases as a sialate donor for glycoconjugate acceptors such as ganglioside GD3. O-acetylation at position C9 of ganglioside GD3 can counteract the pro-apoptotic effects of the ganglioside GD3 in tumor cells. This chain is N-acetylneuraminate (7)9-O-acetyltransferase, found in Mus musculus (Mouse).